A 207-amino-acid chain; its full sequence is MLLNQYRKPLRIGVGGPVGSGKTALLEVLCKRMKDSYQLAVVTNDIYTKEDQRILIDANALSADRIVGVETGGCPHTAIREDASMNLLAVEELISKFNNLDIIFIESGGDNLSATFSPELSDLNLYVIDVAAGDKIPRKGGPGITRSDFLIINKIDLAEYVGASLEIMNRDTNLMRKGLPWSFTNLKTGHGVQSVVDFILRQRLYLQ.

16 to 23 (GPVGSGKT) contacts GTP.

This sequence belongs to the SIMIBI class G3E GTPase family. UreG subfamily. In terms of assembly, homodimer. UreD, UreF and UreG form a complex that acts as a GTP-hydrolysis-dependent molecular chaperone, activating the urease apoprotein by helping to assemble the nickel containing metallocenter of UreC. The UreE protein probably delivers the nickel.

It localises to the cytoplasm. Functionally, facilitates the functional incorporation of the urease nickel metallocenter. This process requires GTP hydrolysis, probably effectuated by UreG. The protein is Urease accessory protein UreG of Blochmanniella pennsylvanica (strain BPEN).